A 357-amino-acid polypeptide reads, in one-letter code: Protein MGF 360-14L (357 aa).

The protein belongs to the asfivirus MGF 360 family. As to quaternary structure, interacts with host IRF3 and TRIM21; these interactions mediates degradation of IRF3 through TRIM21 and ubiquitin-meditated proteolysis.

Its subcellular location is the host cytoplasm. Its function is as follows. Plays a role in virus cell tropism, and may be required for efficient virus replication in macrophages. Also inhibits the host cGAS/STING-mediated type I interferon production by inducing host IRF3 degradation through the proteasome pathway. The polypeptide is Protein MGF 360-14L (Ornithodoros (relapsing fever ticks)).